The chain runs to 1462 residues: NK-tumor recognition protein (1462 aa).

One can recognise a PPIase cyclophilin-type domain in the interval 10-175; it reads HFDIEINREP…ADVRVIDCGV (166 aa). 2 disordered regions span residues 187-591 and 607-627; these read KKRK…TMAQ and VIPLSDSPPPSRWKPGQKPWK. Residues 198 to 213 are compositionally biased toward low complexity; that stretch reads SDSSSNSSSSSESSSE. A compositionally biased stretch (basic residues) spans 221–240; the sequence is SRRRKHKRRPKVKRSKKRRK. 2 stretches are compositionally biased toward basic and acidic residues: residues 241-250 and 258-286; these read EASSSEEPRN and GHSERSDTNEKRSVDSSAKREKPVVRPEE. Lysine 323 participates in a covalent cross-link: Glycyl lysine isopeptide (Lys-Gly) (interchain with G-Cter in SUMO2). The span at 329-345 shows a compositional bias: basic residues; the sequence is SGRKIKGRGTIRYHTPP. Phosphoserine is present on residues serine 379, serine 401, and serine 416. A compositionally biased stretch (basic and acidic residues) spans 382-402; it reads KWSKGDKLSDPCSSRWDERSL. Positions 403–421 are enriched in polar residues; the sequence is SQRSRSWSYNGYYSDLSTA. Residues 423-459 are compositionally biased toward basic residues; it reads HSGHHKKRRKEKKVKHKKKGKKQKHCRRHKQTKKRRI. Phosphoserine occurs at positions 463 and 471. Residues 497–507 show a composition bias toward basic and acidic residues; that stretch reads KRDWSKSDKDV. Residues 524–542 show a composition bias toward low complexity; sequence HSQSYSRGSSRSRTASKSS. The segment covering 543–568 has biased composition (basic residues); the sequence is SHSRSRSKSRSSSKSGHRKRASKSPR. Glycyl lysine isopeptide (Lys-Gly) (interchain with G-Cter in SUMO2) cross-links involve residues lysine 578 and lysine 581. Serine 613 bears the Phosphoserine mark. A Glycyl lysine isopeptide (Lys-Gly) (interchain with G-Cter in SUMO2) cross-link involves residue lysine 639. Serine 648 carries the post-translational modification Phosphoserine. Residues lysine 656 and lysine 666 each participate in a glycyl lysine isopeptide (Lys-Gly) (interchain with G-Cter in SUMO2) cross-link. The segment at 658 to 1072 is disordered; sequence TGSSSSYHKR…EEDLSGKHDT (415 aa). Low complexity-rich tracts occupy residues 699–725 and 736–749; these read SRSYSRSYTRSRSLASSHSRSRSPSSR and SQCSRSSSYTSISS. Positions 754–774 are enriched in basic residues; sequence RAKRRLRSSGKKNSVSHKKHS. Positions 775–800 are enriched in basic and acidic residues; sequence SSSEKTLHSKYVKGRDRSSCVRKYSE. Low complexity predominate over residues 801–815; the sequence is SRSSLDYSSDSEQSS. Basic and acidic residues-rich tracts occupy residues 823 to 870 and 885 to 909; these read QEKE…DHLR and WDSESNSERDVTKNSKNDSHPSSDK. Residues serine 866, serine 887, serine 889, serine 891, and serine 907 each carry the phosphoserine modification. The segment covering 910–922 has biased composition (acidic residues); sequence EEGEATSDSESEV. Residues 932–969 show a composition bias toward polar residues; that stretch reads TTKSSTNTSLPDDNGAWKSSKQRTSTSDSEGSCSNSEN. Positions 988–1013 are enriched in basic residues; that stretch reads EHTKKVKEKLKGKKDKKHKAPKRKQA. A compositionally biased stretch (acidic residues) spans 1022-1031; sequence FGEEEEEEID. Basic and acidic residues predominate over residues 1032 to 1072; it reads DKQVTQESKEKKVSENNETIKDNILKTEKSSEEDLSGKHDT. Residue lysine 1057 forms a Glycyl lysine isopeptide (Lys-Gly) (interchain with G-Cter in SUMO2) linkage. Residues serine 1077 and serine 1146 each carry the phosphoserine modification. The segment at 1129–1156 is disordered; that stretch reads MEICTPDRSSPAKVEETSPLGNARLDTP. Position 1155 is a phosphothreonine (threonine 1155). Lysine 1163 is covalently cross-linked (Glycyl lysine isopeptide (Lys-Gly) (interchain with G-Cter in SUMO2)). Residues 1169–1215 are disordered; it reads EHPQAEVVKQESSMSESKVLGEVGKQDSSSASLASAGESTGKKEVAE. Residue lysine 1177 forms a Glycyl lysine isopeptide (Lys-Gly) (interchain with G-Cter in SUMO1); alternate linkage. Residue lysine 1177 forms a Glycyl lysine isopeptide (Lys-Gly) (interchain with G-Cter in SUMO2); alternate linkage. Residue serine 1203 is modified to Phosphoserine. Glycyl lysine isopeptide (Lys-Gly) (interchain with G-Cter in SUMO2) cross-links involve residues lysine 1216, lysine 1225, and lysine 1258. The disordered stretch occupies residues 1251 to 1462; that stretch reads LTTVPEMKPQ…RSPSESSRYS (212 aa). The interval 1311-1348 is arg/Ser tandem repeat-rich; sequence SRSPSRSRSKSETKSRHRTRSVSYSHSRSRSRSSTSSY. Low complexity-rich tracts occupy residues 1331-1351 and 1359-1376; these read SVSYSHSRSRSRSSTSSYRSR and RGWYSRGRTRSRSSSYRS. Over residues 1377–1388 the composition is skewed to basic residues; the sequence is YKSHRTSSRSRS. Over residues 1389–1410 the composition is skewed to low complexity; it reads RSSSYDPHSRSRSYTYDSYYSR. Over residues 1425-1435 the composition is skewed to basic residues; that stretch reads RGRSYNRRSRS.

The protein localises to the cell membrane. It catalyses the reaction [protein]-peptidylproline (omega=180) = [protein]-peptidylproline (omega=0). Inhibited by cyclosporin A (CsA). PPIase that catalyzes the cis-trans isomerization of proline imidic peptide bonds in oligopeptides and may therefore assist protein folding. Component of a putative tumor-recognition complex involved in the function of NK cells. The sequence is that of NK-tumor recognition protein from Homo sapiens (Human).